We begin with the raw amino-acid sequence, 632 residues long: tRNA uridine 5-carboxymethylaminomethyl modification enzyme MnmG (632 aa).

Residues 15–20 (GAGHAG), I127, and S182 contribute to the FAD site. NAD(+) is bound at residue 276–290 (GPRYCPSIEDKIVRF). Q373 is a binding site for FAD.

It belongs to the MnmG family. As to quaternary structure, homodimer. Heterotetramer of two MnmE and two MnmG subunits. It depends on FAD as a cofactor.

It localises to the cytoplasm. Its function is as follows. NAD-binding protein involved in the addition of a carboxymethylaminomethyl (cmnm) group at the wobble position (U34) of certain tRNAs, forming tRNA-cmnm(5)s(2)U34. The protein is tRNA uridine 5-carboxymethylaminomethyl modification enzyme MnmG of Streptococcus pyogenes serotype M18 (strain MGAS8232).